A 108-amino-acid polypeptide reads, in one-letter code: Trp operon repressor homolog (108 aa).

A DNA-binding region spans residues 59–82 (QRQISQLLGVGVATITRGSNELKS).

The protein belongs to the TrpR family. As to quaternary structure, homodimer.

The protein resides in the cytoplasm. Functionally, this protein is an aporepressor. When complexed with L-tryptophan it binds the operator region of the trp operon and prevents the initiation of transcription. The chain is Trp operon repressor homolog from Aliivibrio fischeri (strain ATCC 700601 / ES114) (Vibrio fischeri).